Reading from the N-terminus, the 276-residue chain is Undecaprenyl-diphosphatase (276 aa).

Helical transmembrane passes span 84-104 (YRLGWYVIIGTIPICVLGLLF), 115-135 (LWVVATALVVFSGVIALAEYL), 188-208 (FGFLLAIPAVFASGLFSLPDA), 222-242 (QLLVATLIAFVVGLAAVSWFL), and 250-270 (MYWFVGYRVVVGVVVLILLAT).

Belongs to the UppP family.

The protein resides in the cell membrane. The catalysed reaction is di-trans,octa-cis-undecaprenyl diphosphate + H2O = di-trans,octa-cis-undecaprenyl phosphate + phosphate + H(+). Catalyzes the dephosphorylation of undecaprenyl diphosphate (UPP). Confers resistance to bacitracin. This chain is Undecaprenyl-diphosphatase, found in Mycobacterium ulcerans (strain Agy99).